Consider the following 186-residue polypeptide: Intraflagellar transport protein 27 homolog (186 aa).

Residues 12 to 19 (GDPAVGKT), 64 to 68 (DSAGK), and 123 to 126 (NKTD) contribute to the GTP site.

This sequence belongs to the small GTPase superfamily. Rab family. In terms of assembly, component of the IFT complex B, at least composed of IFT20, IFT25, IFT27, IFT52, IFT57, IFT74, IFT81, IFT88 and TRAF3IP1. Interacts with IFT25. Interacts with IFT70B. Interacts with RABL2/RABL2A; binding is equal in the presence of GTP or GDP. Interacts with ARL6; recognizes and binds with the GTP-free form of ARL6.

It is found in the cell projection. The protein localises to the cilium. The protein resides in the cytoplasm. Its subcellular location is the flagellum. Small GTPase-like component of the intraflagellar transport (IFT) complex B that promotes the exit of the BBSome complex from cilia via its interaction with ARL6. Not involved in entry of the BBSome complex into cilium. Prevents aggregation of GTP-free ARL6. Required for hedgehog signaling. Forms a subcomplex within the IFT complex B with IFT25. Its role in intraflagellar transport is mainly seen in tissues rich in ciliated cells such as kidney and testis. Essential for male fertility, spermiogenesis and sperm flagella formation. Plays a role in the early development of the kidney. May be involved in the regulation of ureteric bud initiation. In Homo sapiens (Human), this protein is Intraflagellar transport protein 27 homolog (IFT27).